A 717-amino-acid chain; its full sequence is RNA helicase NPH-II (717 aa).

Residues 193–384 (FEIFISKKNC…IYFKNIVEIY (192 aa)) enclose the Helicase ATP-binding domain. ATP is bound at residue 206-213 (GGTGIGKT). Residues 331–334 (DEIH) carry the DEXH box motif. The Helicase C-terminal domain maps to 406–566 (ILKNYMPSVG…VFKYNNMDYY (161 aa)).

It belongs to the DEAD box helicase family. DEAH subfamily. As to quaternary structure, monomer.

It localises to the virion. It catalyses the reaction ATP + H2O = ADP + phosphate + H(+). Functionally, NTP-dependent helicase that catalyzes unidirectional unwinding of 3'tailed duplex RNAs and plays an important role during transcription of early mRNAs, presumably by preventing R-loop formation behind the elongating RNA polymerase. Might also play a role in the export of newly synthesized mRNA chains out of the core into the cytoplasm. Required for replication and propagation of viral particles. The chain is RNA helicase NPH-II (NPH2) from Melanoplus sanguinipes (Migratory grasshopper).